Consider the following 356-residue polypeptide: Galactosylgalactosylxylosylprotein 3-beta-glucuronosyltransferase sqv-8 (356 aa).

The Cytoplasmic segment spans residues 1 to 9; that stretch reads MFPSRLLEK. A helical; Signal-anchor for type II membrane protein membrane pass occupies residues 10-30; it reads WWLRAFIALVIFFVWQLFYAI. Over 31 to 356 the chain is Lumenal; the sequence is NRVQSLEEER…LEAHALGVDN (326 aa). Residues asparagine 93 and asparagine 173 are each glycosylated (N-linked (GlcNAc...) asparagine). Mn(2+) is bound at residue aspartate 208. 2 N-linked (GlcNAc...) asparagine glycosylation sites follow: asparagine 246 and asparagine 272. Glutamate 294 acts as the Proton acceptor in catalysis.

Belongs to the glycosyltransferase 43 family.

The protein localises to the membrane. It catalyses the reaction 3-O-(beta-D-galactosyl-(1-&gt;3)-beta-D-galactosyl-(1-&gt;4)-beta-D-xylosyl)-L-seryl-[protein] + UDP-alpha-D-glucuronate = 3-O-(beta-D-GlcA-(1-&gt;3)-beta-D-Gal-(1-&gt;3)-beta-D-Gal-(1-&gt;4)-beta-D-Xyl)-L-seryl-[protein] + UDP + H(+). Functionally, glycosyltransferase required for the biosynthesis of the tetrasaccharide (GlcA-Gal-Gal-Xyl-)Ser core linker of heparan sulfate and chondroitin sulfate. May be involved in the biosynthesis of the HNK-1 carbohydrate epitope on glycoproteins. Required for embryonic development. Involved in the elongation of the pharyngeal isthmus during the later stages of embryonic development. Involved in vulval epithelium invagination. The chain is Galactosylgalactosylxylosylprotein 3-beta-glucuronosyltransferase sqv-8 (sqv-8) from Caenorhabditis elegans.